Here is a 187-residue protein sequence, read N- to C-terminus: uncharacterized protein (187 aa).

Residues 3–23 (AIIIFLILFIVGVLIGVGVYY) traverse the membrane as a helical segment.

It is found in the membrane. This is an uncharacterized protein from Methanocaldococcus jannaschii (strain ATCC 43067 / DSM 2661 / JAL-1 / JCM 10045 / NBRC 100440) (Methanococcus jannaschii).